The primary structure comprises 520 residues: Laccase-1 (520 aa).

The signal sequence occupies residues 1 to 19; the sequence is MRLSNALVLVAACISSVVA. 3 consecutive Plastocyanin-like domains span residues 21-145, 157-305, and 375-488; these read TRTF…FIVY, VDDE…LTLA, and TVPV…FAEA. Cu cation-binding residues include His-82 and His-84. 2 cysteine pairs are disulfide-bonded: Cys-103–Cys-509 and Cys-135–Cys-229. N-linked (GlcNAc...) asparagine glycosylation occurs at Asn-108. Residues His-127 and His-129 each coordinate Cu cation. Asn-239 and Asn-299 each carry an N-linked (GlcNAc...) asparagine glycan. Cu cation is bound by residues His-417, His-420, His-422, His-470, Cys-471, His-472, and His-476. N-linked (GlcNAc...) asparagine glycosylation occurs at Asn-492.

Belongs to the multicopper oxidase family. Cu cation serves as cofactor.

The protein localises to the secreted. It carries out the reaction 4 hydroquinone + O2 = 4 benzosemiquinone + 2 H2O. In terms of biological role, lignin degradation and detoxification of lignin-derived products. In Agaricus bisporus (White button mushroom), this protein is Laccase-1 (lcc1).